The primary structure comprises 535 residues: 5,6-dihydroxyindole-2-carboxylic acid oxidase (535 aa).

Positions 1-23 (MQLPMLLLVSLPLLLNMFKPAEA) are cleaved as a signal peptide. Over 24–478 (QFPRQCATIE…GPLRVTEMIT (455 aa)) the chain is Lumenal, melanosome. 5 disulfides stabilise this stretch: Cys29–Cys40, Cys41–Cys64, Cys55–Cys98, Cys100–Cys109, and Cys112–Cys121. N-linked (GlcNAc...) asparagine glycans are attached at residues Asn95 and Asn103. Asn180 carries an N-linked (GlcNAc...) asparagine glycan. Residues His191, His214, and His223 each contribute to the Zn(2+) site. Disulfide bonds link Cys257/Cys260 and Cys289/Cys302. N-linked (GlcNAc...) asparagine glycosylation is found at Asn303 and Asn349. Zn(2+)-binding residues include His376 and His380. An N-linked (GlcNAc...) asparagine glycan is attached at Asn384. His403 lines the Zn(2+) pocket. The chain crosses the membrane as a helical span at residues 479–499 (IAIVTALVLVAIIFAAAACIV). At 500–535 (RAKKNRDELHQPLLTDQYQHYSDDYDGIATPSQSVV) the chain is on the cytoplasmic side.

Belongs to the tyrosinase family. Tyrosinase, TYRP1 and TYRP2 may form a multienzyme complex. The cofactor is Cu(2+). It depends on Zn(2+) as a cofactor.

It localises to the melanosome membrane. The enzyme catalyses 2 5,6-dihydroxyindole-2-carboxylate + O2 = 2 indole-5,6-quinone-2-carboxylate + 2 H2O. The protein operates within pigment biosynthesis; melanin biosynthesis. Functionally, plays a role in melanin biosynthesis. Catalyzes the oxidation of 5,6-dihydroxyindole-2-carboxylic acid (DHICA) into indole-5,6-quinone-2-carboxylic acid. May regulate or influence the type of melanin synthesized. Also to a lower extent, capable of hydroxylating tyrosine and producing melanin. In Gallus gallus (Chicken), this protein is 5,6-dihydroxyindole-2-carboxylic acid oxidase (TYRP1).